Reading from the N-terminus, the 406-residue chain is Peptidase T (406 aa).

A Zn(2+)-binding site is contributed by His81. The active site involves Asp83. Asp142 contacts Zn(2+). Glu176 (proton acceptor) is an active-site residue. Zn(2+) is bound by residues Glu177, Asp199, and His381.

The protein belongs to the peptidase M20B family. It depends on Zn(2+) as a cofactor.

The protein localises to the cytoplasm. It carries out the reaction Release of the N-terminal residue from a tripeptide.. Functionally, cleaves the N-terminal amino acid of tripeptides. This is Peptidase T from Streptococcus pneumoniae serotype 2 (strain D39 / NCTC 7466).